The following is a 95-amino-acid chain: Acylphosphatase (95 aa).

The region spanning 5–93 is the Acylphosphatase-like domain; that stretch reads RAHLYIKGKV…GEFQDFRILP (89 aa). Active-site residues include R20 and N38.

The protein belongs to the acylphosphatase family.

It catalyses the reaction an acyl phosphate + H2O = a carboxylate + phosphate + H(+). This chain is Acylphosphatase (acyP), found in Pyrobaculum islandicum (strain DSM 4184 / JCM 9189 / GEO3).